Reading from the N-terminus, the 145-residue chain is 3-dehydroquinate dehydratase (145 aa).

The active-site Proton acceptor is the tyrosine 22. Residues asparagine 71, histidine 77, and aspartate 84 each contribute to the substrate site. The active-site Proton donor is the histidine 97. Residues 98–99 (IS) and arginine 108 each bind substrate.

The protein belongs to the type-II 3-dehydroquinase family. In terms of assembly, homododecamer.

The catalysed reaction is 3-dehydroquinate = 3-dehydroshikimate + H2O. Its pathway is metabolic intermediate biosynthesis; chorismate biosynthesis; chorismate from D-erythrose 4-phosphate and phosphoenolpyruvate: step 3/7. Catalyzes a trans-dehydration via an enolate intermediate. This chain is 3-dehydroquinate dehydratase, found in Exiguobacterium sp. (strain ATCC BAA-1283 / AT1b).